Consider the following 257-residue polypeptide: Protein orai-2 (257 aa).

The next 4 helical transmembrane spans lie at 62 to 79 (ASSR…VAMV), 94 to 114 (LIAF…ALLI), 156 to 176 (LGIL…FLPI), and 201 to 221 (LVST…TIHF).

This sequence belongs to the Orai family.

Its subcellular location is the membrane. Functionally, ca(2+) release-activated Ca(2+)-like (CRAC-like) channel subunit which mediates Ca(2+) influx and increase in Ca(2+)-selective current by synergy with the Ca(2+) sensor, stim1. The chain is Protein orai-2 (orai2) from Xenopus laevis (African clawed frog).